We begin with the raw amino-acid sequence, 466 residues long: ATP synthase subunit beta (466 aa).

155–162 (GGAGVGKT) lines the ATP pocket.

The protein belongs to the ATPase alpha/beta chains family. As to quaternary structure, F-type ATPases have 2 components, CF(1) - the catalytic core - and CF(0) - the membrane proton channel. CF(1) has five subunits: alpha(3), beta(3), gamma(1), delta(1), epsilon(1). CF(0) has three main subunits: a(1), b(2) and c(9-12). The alpha and beta chains form an alternating ring which encloses part of the gamma chain. CF(1) is attached to CF(0) by a central stalk formed by the gamma and epsilon chains, while a peripheral stalk is formed by the delta and b chains.

The protein localises to the cell inner membrane. It catalyses the reaction ATP + H2O + 4 H(+)(in) = ADP + phosphate + 5 H(+)(out). Functionally, produces ATP from ADP in the presence of a proton gradient across the membrane. The catalytic sites are hosted primarily by the beta subunits. In Bordetella bronchiseptica (strain ATCC BAA-588 / NCTC 13252 / RB50) (Alcaligenes bronchisepticus), this protein is ATP synthase subunit beta.